The chain runs to 184 residues: Casparian strip membrane protein 3 (184 aa).

The Cytoplasmic portion of the chain corresponds to 1-24 (MEGSEEHGETSKAPLSRGVSKGVS). A helical membrane pass occupies residues 25–45 (ILDVILRFVAIIGTLASAIAM). Residues 46 to 72 (GTTNQTLPFFTQFIRFKAQYSDLPTLT) are Extracellular-facing. The N-linked (GlcNAc...) asparagine glycan is linked to Asn-49. A helical transmembrane segment spans residues 73 to 93 (FFVVANSIVSAYLILSLPLSI). Topologically, residues 94–105 (VHVIRSRAKYSR) are cytoplasmic. Residues 106 to 126 (LILIFFDAAMLALVTAGASAA) form a helical membrane-spanning segment. Topologically, residues 127 to 159 (AAIVYLAHKGNARANWLAICQQFDSFCERISGS) are extracellular. The helical transmembrane segment at 160–180 (LIGSFAAMVVLVLLIFLSAIA) threads the bilayer. The Cytoplasmic portion of the chain corresponds to 181 to 184 (LARR).

Belongs to the Casparian strip membrane proteins (CASP) family. As to quaternary structure, homodimer and heterodimers.

It is found in the cell membrane. Its function is as follows. Regulates membrane-cell wall junctions and localized cell wall deposition. Required for establishment of the Casparian strip membrane domain (CSD) and the subsequent formation of Casparian strips, a cell wall modification of the root endodermis that determines an apoplastic barrier between the intraorganismal apoplasm and the extraorganismal apoplasm and prevents lateral diffusion. This Oryza sativa subsp. indica (Rice) protein is Casparian strip membrane protein 3.